Consider the following 691-residue polypeptide: Elongation factor G (691 aa).

A tr-type G domain is found at 8 to 283; the sequence is KKVRNIGIAA…AVVAYLPAPD (276 aa). Residues 17–24, 81–85, and 135–138 each bind GTP; these read AHIDAGKT, DTPGH, and NKMD.

The protein belongs to the TRAFAC class translation factor GTPase superfamily. Classic translation factor GTPase family. EF-G/EF-2 subfamily.

It localises to the cytoplasm. Catalyzes the GTP-dependent ribosomal translocation step during translation elongation. During this step, the ribosome changes from the pre-translocational (PRE) to the post-translocational (POST) state as the newly formed A-site-bound peptidyl-tRNA and P-site-bound deacylated tRNA move to the P and E sites, respectively. Catalyzes the coordinated movement of the two tRNA molecules, the mRNA and conformational changes in the ribosome. This chain is Elongation factor G, found in Campylobacter jejuni subsp. doylei (strain ATCC BAA-1458 / RM4099 / 269.97).